The sequence spans 170 residues: Envelope protein 168 (170 aa).

A topological domain (intravirion) is located at residue Met1. A helical membrane pass occupies residues Phe2 to Phe22. The Virion surface segment spans residues Tyr23–Leu170.

It belongs to the asfivirus envelope protein p22 family.

It is found in the virion membrane. Its subcellular location is the host cell membrane. The polypeptide is Envelope protein 168 (African swine fever virus (isolate Tick/South Africa/Pretoriuskop Pr4/1996) (ASFV)).